A 170-amino-acid polypeptide reads, in one-letter code: Adenine phosphoribosyltransferase (170 aa).

The protein belongs to the purine/pyrimidine phosphoribosyltransferase family. In terms of assembly, homodimer.

It localises to the cytoplasm. It catalyses the reaction AMP + diphosphate = 5-phospho-alpha-D-ribose 1-diphosphate + adenine. It functions in the pathway purine metabolism; AMP biosynthesis via salvage pathway; AMP from adenine: step 1/1. Functionally, catalyzes a salvage reaction resulting in the formation of AMP, that is energically less costly than de novo synthesis. The polypeptide is Adenine phosphoribosyltransferase (Trichodesmium erythraeum (strain IMS101)).